A 250-amino-acid polypeptide reads, in one-letter code: DNA repair protein RecO (250 aa).

Belongs to the RecO family.

Involved in DNA repair and RecF pathway recombination. The chain is DNA repair protein RecO from Staphylococcus aureus (strain MRSA252).